Reading from the N-terminus, the 63-residue chain is uncharacterized protein (63 aa).

Residues Met1–Ala18 form the signal peptide.

This is an uncharacterized protein from Bacillus subtilis (strain 168).